Consider the following 461-residue polypeptide: Cysteine--tRNA ligase (461 aa).

Cys-29 lines the Zn(2+) pocket. Positions 31-41 (PTVYNYAHIGN) match the 'HIGH' region motif. 3 residues coordinate Zn(2+): Cys-214, His-239, and Glu-243. Residues 271-275 (KMSKS) carry the 'KMSKS' region motif. An ATP-binding site is contributed by Lys-274.

This sequence belongs to the class-I aminoacyl-tRNA synthetase family. As to quaternary structure, monomer. It depends on Zn(2+) as a cofactor.

It is found in the cytoplasm. It carries out the reaction tRNA(Cys) + L-cysteine + ATP = L-cysteinyl-tRNA(Cys) + AMP + diphosphate. This Hyphomonas neptunium (strain ATCC 15444) protein is Cysteine--tRNA ligase.